We begin with the raw amino-acid sequence, 352 residues long: tRNA pseudouridine synthase D (352 aa).

Catalysis depends on Asp78, which acts as the Nucleophile. The 147-residue stretch at Gly153–Leu299 folds into the TRUD domain.

It belongs to the pseudouridine synthase TruD family.

The catalysed reaction is uridine(13) in tRNA = pseudouridine(13) in tRNA. Responsible for synthesis of pseudouridine from uracil-13 in transfer RNAs. The polypeptide is tRNA pseudouridine synthase D (Aeromonas hydrophila subsp. hydrophila (strain ATCC 7966 / DSM 30187 / BCRC 13018 / CCUG 14551 / JCM 1027 / KCTC 2358 / NCIMB 9240 / NCTC 8049)).